The sequence spans 132 residues: Small ribosomal subunit protein uS8c (132 aa).

Belongs to the universal ribosomal protein uS8 family. As to quaternary structure, part of the 30S ribosomal subunit.

It is found in the plastid. The protein resides in the chloroplast. In terms of biological role, one of the primary rRNA binding proteins, it binds directly to 16S rRNA central domain where it helps coordinate assembly of the platform of the 30S subunit. The sequence is that of Small ribosomal subunit protein uS8c (rps8) from Platanus occidentalis (Sycamore).